We begin with the raw amino-acid sequence, 327 residues long: Phenylalanine--tRNA ligase alpha subunit (327 aa).

Glu252 provides a ligand contact to Mg(2+).

The protein belongs to the class-II aminoacyl-tRNA synthetase family. Phe-tRNA synthetase alpha subunit type 1 subfamily. In terms of assembly, tetramer of two alpha and two beta subunits. Mg(2+) is required as a cofactor.

It is found in the cytoplasm. The catalysed reaction is tRNA(Phe) + L-phenylalanine + ATP = L-phenylalanyl-tRNA(Phe) + AMP + diphosphate + H(+). This Pectobacterium atrosepticum (strain SCRI 1043 / ATCC BAA-672) (Erwinia carotovora subsp. atroseptica) protein is Phenylalanine--tRNA ligase alpha subunit.